The chain runs to 274 residues: NAD(P)H-quinone oxidoreductase subunit K, chloroplastic (274 aa).

Composition is skewed to polar residues over residues 1-10 (MVINQKNLSS) and 18-27 (SGSQSSTKAD). The interval 1–27 (MVINQKNLSSPVAPYDKSGSQSSTKAD) is disordered. Positions 90, 91, 155, and 186 each coordinate [4Fe-4S] cluster.

Belongs to the complex I 20 kDa subunit family. As to quaternary structure, NDH is composed of at least 16 different subunits, 5 of which are encoded in the nucleus. Requires [4Fe-4S] cluster as cofactor.

The protein localises to the plastid. The protein resides in the chloroplast thylakoid membrane. The catalysed reaction is a plastoquinone + NADH + (n+1) H(+)(in) = a plastoquinol + NAD(+) + n H(+)(out). It catalyses the reaction a plastoquinone + NADPH + (n+1) H(+)(in) = a plastoquinol + NADP(+) + n H(+)(out). Functionally, NDH shuttles electrons from NAD(P)H:plastoquinone, via FMN and iron-sulfur (Fe-S) centers, to quinones in the photosynthetic chain and possibly in a chloroplast respiratory chain. The immediate electron acceptor for the enzyme in this species is believed to be plastoquinone. Couples the redox reaction to proton translocation, and thus conserves the redox energy in a proton gradient. The chain is NAD(P)H-quinone oxidoreductase subunit K, chloroplastic from Chlorokybus atmophyticus (Soil alga).